Reading from the N-terminus, the 140-residue chain is Ribosome maturation factor RimP (140 aa).

The protein belongs to the RimP family.

It localises to the cytoplasm. In terms of biological role, required for maturation of 30S ribosomal subunits. The chain is Ribosome maturation factor RimP from Campylobacter hominis (strain ATCC BAA-381 / DSM 21671 / CCUG 45161 / LMG 19568 / NCTC 13146 / CH001A).